The chain runs to 594 residues: DNA polymerase epsilon subunit B (594 aa).

Belongs to the DNA polymerase epsilon subunit B family. Heterotetramer. Consists of four subunits: pol2, dpb2, dpb3 and dpb4. Interacts with dpb3.

It localises to the nucleus. Functionally, as accessory component of the DNA polymerase epsilon (DNA polymerase II) participates in chromosomal DNA replication. This Schizosaccharomyces pombe (strain 972 / ATCC 24843) (Fission yeast) protein is DNA polymerase epsilon subunit B (dpb2).